A 666-amino-acid chain; its full sequence is Non-receptor tyrosine-protein kinase TNK1 (666 aa).

Serine 96 carries the phosphoserine modification. Residues valine 116–leucine 383 enclose the Protein kinase domain. ATP contacts are provided by residues leucine 122 to valine 130 and lysine 148. Aspartate 245 functions as the Proton acceptor in the catalytic mechanism. The residue at position 255 (serine 255) is a Phosphoserine. One can recognise an SH3 domain in the interval alanine 381–leucine 441. The interval glycine 442–proline 589 is disordered. Basic and acidic residues predominate over residues histidine 457–threonine 473. A Phosphoserine modification is found at serine 498. The residue at position 510 (threonine 510) is a Phosphothreonine. A Phosphoserine modification is found at serine 515. A compositionally biased stretch (pro residues) spans aspartate 531–proline 544. Serine 582 carries the phosphoserine modification.

The protein belongs to the protein kinase superfamily. Tyr protein kinase family. Interacts with the SH3 domain of PLCG1 via its Pro-rich domain. In terms of processing, autophosphorylated on tyrosine residues. Expressed in whole embryo and all adult tissues examined including liver, kidney, heart, brain, skeletal muscle and intestine. Also detected in various myeloid- and lymphoid-derived cell lines.

Its subcellular location is the membrane. The protein resides in the cytoplasm. The enzyme catalyses L-tyrosyl-[protein] + ATP = O-phospho-L-tyrosyl-[protein] + ADP + H(+). Its function is as follows. May function in signaling pathways utilized broadly during fetal development and more selectively in adult tissues and in cells of the lymphohematopoietic system. Could specifically be involved in phospholipid signal transduction. Involved in negative regulation of cell growth. Has tumor suppressor properties. Plays a negative regulatory role in the Ras-MAPK pathway. This is Non-receptor tyrosine-protein kinase TNK1 from Mus musculus (Mouse).